The primary structure comprises 166 residues: Large ribosomal subunit protein uL10 (166 aa).

It belongs to the universal ribosomal protein uL10 family. In terms of assembly, part of the ribosomal stalk of the 50S ribosomal subunit. The N-terminus interacts with L11 and the large rRNA to form the base of the stalk. The C-terminus forms an elongated spine to which L12 dimers bind in a sequential fashion forming a multimeric L10(L12)X complex.

Its function is as follows. Forms part of the ribosomal stalk, playing a central role in the interaction of the ribosome with GTP-bound translation factors. In Streptococcus agalactiae serotype V (strain ATCC BAA-611 / 2603 V/R), this protein is Large ribosomal subunit protein uL10.